Reading from the N-terminus, the 403-residue chain is TBC1 domain family member 20 (403 aa).

A disordered region spans residues 1 to 25 (MALRSAQGDGPTSGHWDGGAEKADF). The Rab-GAP TBC domain occupies 60–246 (LLTDEIRRKV…RLYDFFLACH (187 aa)). A run of 2 helical transmembrane segments spans residues 238–258 (LYDF…AVIV) and 367–387 (FVKL…LAVV).

(Microbial infection) Directly interacts with the N-terminal amphipathic helix of hepatitis C virus (HCV) NS5A.

Its subcellular location is the membrane. Functionally, GTPase-activating protein (GAP) specific for Rab1 and Rab2 small GTPase families for which it can accelerate the intrinsic GTP hydrolysis rate by more than five orders of magnitude. Also shows GAP activity for RAB18 GTPase. Promotes RAB18 dissociation from the endoplasmic reticulum (ER) membrane into the cytosol, probably through stimulating RAB18 GTP-hydrolysis. Involved in maintaining endoplasmic reticulum structure. The protein is TBC1 domain family member 20 of Homo sapiens (Human).